Reading from the N-terminus, the 374-residue chain is UPF0754 membrane protein SA1664 (374 aa).

The next 2 helical transmembrane spans lie at 4-24 and 354-374; these read LFII…TNVI and SLGF…AIFV.

The protein belongs to the UPF0754 family.

It localises to the cell membrane. This chain is UPF0754 membrane protein SA1664, found in Staphylococcus aureus (strain N315).